The sequence spans 95 residues: Large ribosomal subunit protein uL23 (95 aa).

Belongs to the universal ribosomal protein uL23 family. In terms of assembly, part of the 50S ribosomal subunit. Contacts protein L29, and trigger factor when it is bound to the ribosome.

Functionally, one of the early assembly proteins it binds 23S rRNA. One of the proteins that surrounds the polypeptide exit tunnel on the outside of the ribosome. Forms the main docking site for trigger factor binding to the ribosome. The protein is Large ribosomal subunit protein uL23 of Deinococcus deserti (strain DSM 17065 / CIP 109153 / LMG 22923 / VCD115).